A 207-amino-acid polypeptide reads, in one-letter code: Guanylate kinase (207 aa).

A Guanylate kinase-like domain is found at 4–184 (GTLYIVSAPS…ALTDLKTIIR (181 aa)). 11–18 (APSGAGKS) lines the ATP pocket.

It belongs to the guanylate kinase family.

The protein resides in the cytoplasm. It catalyses the reaction GMP + ATP = GDP + ADP. Its function is as follows. Essential for recycling GMP and indirectly, cGMP. The sequence is that of Guanylate kinase from Escherichia coli O157:H7.